Here is a 396-residue protein sequence, read N- to C-terminus: Probable sugar efflux transporter (396 aa).

Residues 1–14 lie on the Cytoplasmic side of the membrane; the sequence is MTINPVSRKVAWLR. A helical transmembrane segment spans residues 15–35; it reads VVTLAIAAFIFNTTEFVPVGL. Residues 36 to 49 are Periplasmic-facing; the sequence is LSDIAESFHMQTAQ. The helical transmembrane segment at 50-70 threads the bilayer; that stretch reads VGIMLTIYAWVVAVMSLPFML. The Cytoplasmic portion of the chain corresponds to 71–80; sequence LTSQMERRKL. Residues 81–101 form a helical membrane-spanning segment; it reads LIYLFVLFIASHVLSFLAWNF. Thr102 is a topological domain (periplasmic). Residues 103–123 form a helical membrane-spanning segment; sequence VLVISRIGIAFAHAIFWSITA. At 124–135 the chain is on the cytoplasmic side; it reads SLAIRLAPAGKR. Residues 136 to 156 form a helical membrane-spanning segment; it reads AQALSLIATGTALAMVLGLPI. At 157-168 the chain is on the periplasmic side; that stretch reads GRVVGQYFGWRT. Residues 169–189 form a helical membrane-spanning segment; that stretch reads TFFAIGMGALITLLCLIKLLP. At 190 to 208 the chain is on the cytoplasmic side; sequence KLPSEHSGSLKSLPLLFRR. A helical transmembrane segment spans residues 209–229; the sequence is PALMSLYVLTVVVVTAHYTAY. Residues 230–245 are Periplasmic-facing; the sequence is SYIEPFVQNVAGLSAN. A helical membrane pass occupies residues 246 to 266; that stretch reads FATVLLLILGGAGIIGSLVFG. The Cytoplasmic portion of the chain corresponds to 267-274; it reads KLGNRHAS. Residues 275–295 form a helical membrane-spanning segment; it reads SLVSIAIALLVVCLLLLLPAA. Topologically, residues 296–300 are periplasmic; it reads ESEAH. The helical transmembrane segment at 301-321 threads the bilayer; that stretch reads LAILSIFWGIAIMVIGLGMQV. The Cytoplasmic portion of the chain corresponds to 322–332; the sequence is KVLALAPDATD. The chain crosses the membrane as a helical span at residues 333 to 353; sequence VAMALFSGIFNIGIGAGALVG. Over 354–363 the chain is Periplasmic; that stretch reads NQVSLHWSMS. A helical membrane pass occupies residues 364–384; it reads AIGYIGAIPACAALVWAVLIF. The Cytoplasmic portion of the chain corresponds to 385–396; sequence RKWPVTLEEQPH.

This sequence belongs to the major facilitator superfamily. SotB (TC 2.A.1.2) family.

The protein localises to the cell inner membrane. In terms of biological role, involved in the efflux of sugars. The physiological role may be the reduction of the intracellular concentration of toxic sugars or sugar metabolites. The sequence is that of Probable sugar efflux transporter from Salmonella typhimurium (strain LT2 / SGSC1412 / ATCC 700720).